Consider the following 175-residue polypeptide: Orotate phosphoribosyltransferase (175 aa).

Residues arginine 89, lysine 90, lysine 93, and glutamate 115–serine 123 each bind 5-phospho-alpha-D-ribose 1-diphosphate. Orotate-binding residues include threonine 119 and arginine 147.

Belongs to the purine/pyrimidine phosphoribosyltransferase family. PyrE subfamily. In terms of assembly, homodimer. The cofactor is Mg(2+).

The enzyme catalyses orotidine 5'-phosphate + diphosphate = orotate + 5-phospho-alpha-D-ribose 1-diphosphate. Its pathway is pyrimidine metabolism; UMP biosynthesis via de novo pathway; UMP from orotate: step 1/2. Functionally, catalyzes the transfer of a ribosyl phosphate group from 5-phosphoribose 1-diphosphate to orotate, leading to the formation of orotidine monophosphate (OMP). In Halobacterium salinarum (strain ATCC 700922 / JCM 11081 / NRC-1) (Halobacterium halobium), this protein is Orotate phosphoribosyltransferase.